We begin with the raw amino-acid sequence, 295 residues long: Sulfotransferase 1A3 (295 aa).

Residue 48-53 (KSGTTW) coordinates 3'-phosphoadenylyl sulfate. Dopamine-binding positions include aspartate 86 and 106-108 (KSH). Histidine 108 (proton acceptor) is an active-site residue. Residues arginine 130 and serine 138 each contribute to the 3'-phosphoadenylyl sulfate site. Glutamate 146 is a dopamine binding site. Residues tyrosine 193, 227-232 (TSFKEM), and 257-259 (RKG) each bind 3'-phosphoadenylyl sulfate.

Belongs to the sulfotransferase 1 family. Homodimer. The N-terminus is blocked. Liver, colon, kidney, lung, brain, spleen, small intestine, placenta and leukocyte.

Its subcellular location is the cytoplasm. The catalysed reaction is a phenol + 3'-phosphoadenylyl sulfate = an aryl sulfate + adenosine 3',5'-bisphosphate + H(+). It carries out the reaction 4-nitrophenol + 3'-phosphoadenylyl sulfate = 4-nitrophenyl sulfate + adenosine 3',5'-bisphosphate. The enzyme catalyses dopamine + 3'-phosphoadenylyl sulfate = dopamine 3-O-sulfate + adenosine 3',5'-bisphosphate + H(+). It catalyses the reaction dopamine + 3'-phosphoadenylyl sulfate = dopamine 4-O-sulfate + adenosine 3',5'-bisphosphate + H(+). The catalysed reaction is serotonin + 3'-phosphoadenylyl sulfate = serotonin O-sulfate + adenosine 3',5'-bisphosphate + H(+). It carries out the reaction (R)-adrenaline + 3'-phosphoadenylyl sulfate = (R)-adrenaline 4'-O-sulfate + adenosine 3',5'-bisphosphate + H(+). The enzyme catalyses (R)-noradrenaline + 3'-phosphoadenylyl sulfate = (R)-noradrenaline 4'-O-sulfate + adenosine 3',5'-bisphosphate + H(+). It catalyses the reaction 3,3',5-triiodo-L-thyronine + 3'-phosphoadenylyl sulfate = 3,3',5-triiodo-L-thyronine sulfate + adenosine 3',5'-bisphosphate + H(+). The catalysed reaction is 3,3',5'-triiodo-L-thyronine + 3'-phosphoadenylyl sulfate = 3,3',5'-triiodo-L-thyronine sulfate + adenosine 3',5'-bisphosphate + H(+). It carries out the reaction 3,3'-diiodo-L-thyronine + 3'-phosphoadenylyl sulfate = 3,3'-diiodo-L-thyronine sulfate + adenosine 3',5'-bisphosphate + H(+). The enzyme catalyses L-thyroxine + 3'-phosphoadenylyl sulfate = L-thyroxine sulfate + adenosine 3',5'-bisphosphate + H(+). In terms of biological role, sulfotransferase that utilizes 3'-phospho-5'-adenylyl sulfate (PAPS) as sulfonate donor to catalyze the sulfate conjugation of phenolic monoamines (neurotransmitters such as dopamine, (R)-adrenaline/epinephrine, (R)-noradrenaline/norepinephrine and serotonin) and phenolic and catechol drugs. Catalyzes the sulfation of T4 (L-thyroxine/3,5,3',5'-tetraiodothyronine), T3 (3,5,3'-triiodothyronine), rT3 (3,3',5'-triiodothyronine) and 3,3'-T2 (3,3'-diiodothyronine), with a substrate preference of 3,3'-T2 &gt; rT3 &gt; T3 &gt; T4. This chain is Sulfotransferase 1A3 (SULT1A3), found in Homo sapiens (Human).